Consider the following 794-residue polypeptide: Ent-copalyl diphosphate synthase 2 (794 aa).

The transit peptide at 1–35 (MSSSSNVTSLPRLTTAGGVFPREMVRVHSSCNILR) directs the protein to the chloroplast. Lys238 lines the substrate pocket. Residues Asp369 and Asp371 each coordinate Mg(2+). The short motif at 369-372 (DVDD) is the DXDD motif element. Residue Lys455 coordinates substrate.

The protein belongs to the terpene synthase family. Tpsc subfamily. It depends on Mg(2+) as a cofactor. In terms of tissue distribution, expressed in leaves.

The protein localises to the plastid. The protein resides in the chloroplast. The catalysed reaction is (2E,6E,10E)-geranylgeranyl diphosphate = ent-copalyl diphosphate. The protein operates within secondary metabolite biosynthesis; terpenoid biosynthesis. In terms of biological role, involved in the biosynthesis of ent-kaurene diterpenoids natural products such as oridonin, miltiradiene, eriocalyxin B and nezukol, known to exhibit antitumor, anti-inflammatory and antibacterial activities. Catalyzes the conversion of (2E,6E,10E)-geranylgeranyl diphosphate (GGPP) to ent-copalyl diphosphate (ent-CPP). The sequence is that of Ent-copalyl diphosphate synthase 2 from Isodon eriocalyx (Plectranthus eriocalyx).